A 157-amino-acid chain; its full sequence is MEGCAVRRGSCPLLPGPSAWRASPAGWAGRAKLRSWCRASGLPNRPYTLTGGRHGSVSLLRHPGTTTFVQQRSLHQSWEKRIVFSACPVSRSWCPERNFSGSIPAVTPPKLPGHSKSEGPPGKVRKRTTIRSQPLFVTRTRGFGSAVGWLPLGSPVL.

Residues 104 to 127 are disordered; it reads PAVTPPKLPGHSKSEGPPGKVRKR.

The protein is Protein FAM218A (FAM218A) of Homo sapiens (Human).